The primary structure comprises 312 residues: Olfactory receptor 7D2 (312 aa).

Residues 1–25 are Extracellular-facing; it reads MEAGNQTGFLEFILLGLSEDPELQP. An N-linked (GlcNAc...) asparagine glycan is attached at Asn5. The helical transmembrane segment at 26–46 threads the bilayer; that stretch reads FIFGLFLSMYLVTVLGNLLII. The Cytoplasmic segment spans residues 47 to 54; the sequence is LAISSDSH. The helical transmembrane segment at 55-75 threads the bilayer; it reads LHTPMYFFLSNLSWVDICFST. Residues 76–99 lie on the Extracellular side of the membrane; the sequence is CIVPKMLVNIQTENKAISYMDCLT. A disulfide bridge links Cys97 with Cys189. Residues 100 to 120 form a helical membrane-spanning segment; it reads QVYFSMFFPILDTLLLTVMAY. The Cytoplasmic segment spans residues 121–139; it reads DRFVAVCHPLHYMIIMNPH. The helical transmembrane segment at 140 to 160 threads the bilayer; the sequence is LCGLLVFVTWLIGVMTSLLHI. The Extracellular portion of the chain corresponds to 161–197; sequence SLMMHLIFCKDFEIPHFFCELTYILQLACSDTFLNST. A helical membrane pass occupies residues 198-217; it reads LIYFMTGVLGVFPLLGIIFS. Topologically, residues 218 to 237 are cytoplasmic; it reads YSRIASSIRKMSSSGGKQKA. Residues 238–258 form a helical membrane-spanning segment; that stretch reads LSTCGSHLSVVSLFYGTGIGV. The Extracellular portion of the chain corresponds to 259–271; that stretch reads HFTSAVTHSSQKI. Residues 272 to 292 form a helical membrane-spanning segment; that stretch reads SVASVMYTVVTPMLNPFIYSL. Over 293-312 the chain is Cytoplasmic; that stretch reads RNKDVKGALGSLLSRAASCL.

It belongs to the G-protein coupled receptor 1 family.

It localises to the cell membrane. Odorant receptor. This is Olfactory receptor 7D2 (OR7D2) from Homo sapiens (Human).